The following is an 87-amino-acid chain: Omega-theraphotoxin-Gr1a (87 aa).

Residues 1-24 (MKAQIFVVVLGLAALSVLCYGSEA) form the signal peptide. The propeptide occupies 25 to 49 (DESALHEEIFQLLAASDEVPKPQER). 3 disulfides stabilise this stretch: C51–C65, C58–C70, and C64–C79. V85 bears the Valine amide mark.

As to expression, expressed by the venom gland.

The protein localises to the secreted. In terms of biological role, inhibits P/Q- (Cav2.1/CACNA1A) and N-type (Cav2.2/CACNA1B) voltage-gated calcium channel by modifying voltage-dependent gating. It selectively and reversibly blocks the calcium channels coupled to glutamate release. Also inhibits potassium channels (Kv2.1/KCNB1) with lower affinity. Has also been shown to weakly inhibit Kv11.1/KCNH2/ERG1, Kv1.2/KCNA2, Kv1.3/KCNA3, Nav1.5/SCN5A, Nav1.7/SCN9A and TRPV1. The sequence is that of Omega-theraphotoxin-Gr1a from Grammostola rosea (Chilean rose tarantula).